The sequence spans 299 residues: Acetylglutamate kinase (299 aa).

Residues 64–65, Arg86, and Asn197 contribute to the substrate site; that span reads GG.

Belongs to the acetylglutamate kinase family. ArgB subfamily.

The protein resides in the cytoplasm. The catalysed reaction is N-acetyl-L-glutamate + ATP = N-acetyl-L-glutamyl 5-phosphate + ADP. It functions in the pathway amino-acid biosynthesis; L-arginine biosynthesis; N(2)-acetyl-L-ornithine from L-glutamate: step 2/4. In terms of biological role, catalyzes the ATP-dependent phosphorylation of N-acetyl-L-glutamate. This Sulfurihydrogenibium sp. (strain YO3AOP1) protein is Acetylglutamate kinase.